The primary structure comprises 502 residues: Mannitol 2-dehydrogenase (502 aa).

Residue 37-48 participates in NAD(+) binding; that stretch reads IVHIGVGGFHRA.

This sequence belongs to the mannitol dehydrogenase family. As to quaternary structure, monomer.

The enzyme catalyses D-mannitol + NAD(+) = D-fructose + NADH + H(+). Its function is as follows. Catalyzes the NAD(H)-dependent interconversion of D-fructose and D-mannitol in the mannitol metabolic pathway. In Aspergillus fumigatus (strain CBS 144.89 / FGSC A1163 / CEA10) (Neosartorya fumigata), this protein is Mannitol 2-dehydrogenase.